The sequence spans 754 residues: RNA exonuclease 5 (754 aa).

Residues M1 to P36 form a disordered region. One can recognise an Exonuclease domain in the interval L222–V370. RRM domains are found at residues S488–T562 and G583–Q662.

The chain is RNA exonuclease 5 (Rexo5) from Rattus norvegicus (Rat).